Reading from the N-terminus, the 620-residue chain is Glutathione-regulated potassium-efflux system protein KefC (620 aa).

The next 12 helical transmembrane spans lie at 4 to 24, 26 to 46, 54 to 74, 90 to 110, 114 to 134, 149 to 169, 178 to 198, 218 to 238, 270 to 290, 294 to 314, 327 to 347, and 359 to 379; these read HTLIQALIYLGSAALIVPIAV, LGLGSVLGYLIAGCIIGPWGL, SILHFAEIGVVLMLFIIGLEL, GALQMVICGGLLGLFCMLLGL, VAELIGMTLALSSTAIAMQAM, FAVLLFQDIAAIPLVAMIPLL, MGAFALSALKVAGALVLVVLL, VFSAVALFLVFGFGLLLEEVG, GLLLGLFFIGVGMSIDFGTLL, LRIVILLLGFLIIKIAMLWLI, WFAVLLGQGSEFAFVVFGAAQ, and SLTLAVALSMAATPILLVILN. In terms of domain architecture, RCK N-terminal spans 399–518; the sequence is QPRVIIAGFG…AGVEKPERET (120 aa). Positions 597–620 are disordered; the sequence is GWQGTEEGKHTGNMADEPETKPSS.

Belongs to the monovalent cation:proton antiporter 2 (CPA2) transporter (TC 2.A.37) family. KefC subfamily. Homodimer. Interacts with the regulatory subunit KefF.

The protein localises to the cell inner membrane. Pore-forming subunit of a potassium efflux system that confers protection against electrophiles. Catalyzes K(+)/H(+) antiport. In Escherichia coli (strain K12 / MC4100 / BW2952), this protein is Glutathione-regulated potassium-efflux system protein KefC.